The following is a 184-amino-acid chain: NADH-quinone oxidoreductase subunit B 1 (184 aa).

[4Fe-4S] cluster-binding residues include Cys37, Cys38, Cys103, and Cys132.

It belongs to the complex I 20 kDa subunit family. NDH-1 is composed of 14 different subunits. Subunits NuoB, C, D, E, F, and G constitute the peripheral sector of the complex. Requires [4Fe-4S] cluster as cofactor.

The protein resides in the cell membrane. The catalysed reaction is a quinone + NADH + 5 H(+)(in) = a quinol + NAD(+) + 4 H(+)(out). NDH-1 shuttles electrons from NADH, via FMN and iron-sulfur (Fe-S) centers, to quinones in the respiratory chain. The immediate electron acceptor for the enzyme in this species is believed to be a menaquinone. Couples the redox reaction to proton translocation (for every two electrons transferred, four hydrogen ions are translocated across the cytoplasmic membrane), and thus conserves the redox energy in a proton gradient. The chain is NADH-quinone oxidoreductase subunit B 1 from Streptomyces griseus subsp. griseus (strain JCM 4626 / CBS 651.72 / NBRC 13350 / KCC S-0626 / ISP 5235).